Reading from the N-terminus, the 297-residue chain is Trans-enoyl reductase TOXD (297 aa).

Residues 162 to 165 and Y203 each bind NADP(+); that span reads STAT.

Belongs to the zinc-containing alcohol dehydrogenase family. In terms of assembly, monomer.

In terms of biological role, trans-enoyl reductase; part of the diffuse TOX2 gene cluster that mediates the biosynthesis of the HC-toxin, cyclic tetrapeptide of structure cyclo(D-Pro-L-Ala-D-Ala-L-Aeo), where Aeo stands for 2-amino-9,10-epoxi-8-oxodecanoic acid. HC-toxin is a determinant of specificity and virulence in the interaction between the producing fungus and its host, maize. TOXD does not seem to play a role in HC-toxin biosynthesis. The polypeptide is Trans-enoyl reductase TOXD (Cochliobolus carbonum (Maize leaf spot fungus)).